We begin with the raw amino-acid sequence, 636 residues long: DNA mismatch repair protein MutL (636 aa).

The tract at residues 341-420 is disordered; the sequence is APLINKPEQQ…PGAEEYTPEA (80 aa). Residues 348 to 358 show a composition bias toward basic and acidic residues; the sequence is EQQKLDFDQVR.

It belongs to the DNA mismatch repair MutL/HexB family.

Functionally, this protein is involved in the repair of mismatches in DNA. It is required for dam-dependent methyl-directed DNA mismatch repair. May act as a 'molecular matchmaker', a protein that promotes the formation of a stable complex between two or more DNA-binding proteins in an ATP-dependent manner without itself being part of a final effector complex. The polypeptide is DNA mismatch repair protein MutL (Bacillus licheniformis (strain ATCC 14580 / DSM 13 / JCM 2505 / CCUG 7422 / NBRC 12200 / NCIMB 9375 / NCTC 10341 / NRRL NRS-1264 / Gibson 46)).